Reading from the N-terminus, the 695-residue chain is Polyribonucleotide nucleotidyltransferase (695 aa).

Mg(2+) contacts are provided by aspartate 486 and aspartate 492. One can recognise a KH domain in the interval 553 to 612 (PRIETMQINTSKIATVIGPGGKQIRQIIERSGAQVDINDDGVINIAASTQESINKAKELI). The region spanning 622–690 (GKVYNGRVTS…EKGQLKLSHK (69 aa)) is the S1 motif domain.

It belongs to the polyribonucleotide nucleotidyltransferase family. Mg(2+) serves as cofactor.

The protein resides in the cytoplasm. The enzyme catalyses RNA(n+1) + phosphate = RNA(n) + a ribonucleoside 5'-diphosphate. Functionally, involved in mRNA degradation. Catalyzes the phosphorolysis of single-stranded polyribonucleotides processively in the 3'- to 5'-direction. This Chlamydia trachomatis serovar L2 (strain ATCC VR-902B / DSM 19102 / 434/Bu) protein is Polyribonucleotide nucleotidyltransferase.